The chain runs to 431 residues: tRNA(Ile)-lysidine synthase (431 aa).

ATP is bound at residue 25-30 (SGGPDS).

It belongs to the tRNA(Ile)-lysidine synthase family.

The protein localises to the cytoplasm. The enzyme catalyses cytidine(34) in tRNA(Ile2) + L-lysine + ATP = lysidine(34) in tRNA(Ile2) + AMP + diphosphate + H(+). Its function is as follows. Ligates lysine onto the cytidine present at position 34 of the AUA codon-specific tRNA(Ile) that contains the anticodon CAU, in an ATP-dependent manner. Cytidine is converted to lysidine, thus changing the amino acid specificity of the tRNA from methionine to isoleucine. The sequence is that of tRNA(Ile)-lysidine synthase from Lactobacillus johnsonii (strain CNCM I-12250 / La1 / NCC 533).